Reading from the N-terminus, the 369-residue chain is Type 2 DNA topoisomerase 6 subunit A (369 aa).

The Topo IIA-type catalytic domain occupies 11-149 (QRDLLAREKL…FHMRPEEDGA (139 aa)). Catalysis depends on Tyr106, which acts as the O-(5'-phospho-DNA)-tyrosine intermediate. Glu202 and Asp254 together coordinate Mg(2+).

The protein belongs to the TOP6A family. As to quaternary structure, homodimer. Heterotetramer of two Top6A and two Top6B chains. It depends on Mg(2+) as a cofactor.

The catalysed reaction is ATP-dependent breakage, passage and rejoining of double-stranded DNA.. Functionally, relaxes both positive and negative superturns and exhibits a strong decatenase activity. This is Type 2 DNA topoisomerase 6 subunit A from Methanosarcina barkeri (strain Fusaro / DSM 804).